The sequence spans 511 residues: MAQNVNNIKDHVDLFHQPEYQELFENKKQFEGMPTAEKVQEVAEWTKSWEYREKNFAREALTVNPAKACQPLGALLAAIGFEGTLPFVHGSQGCVAYFRTHLTRHFKEPVSAVSSSMTENAAVFGGLKNMVDGLQNSYALYKPKMIAVCTTCMAEVIGDDLGAFLGNARQDGVIPDDLPVPFAHTPSFVGSHITGYDSMMKSILSTLTEGKKKETTNGKINFIAGFETYIGNVRAIKNIISAFDLEGTLLSDTEMYLDSPNLGEFKMYHEGTSLEDAADSINAEATVTLQTYTTPKTREYIEKKWGQKTYTYRPWGVKGTDEFLMGLSELTGKPIPKEFEIARGRAVDAMTDTQAWVHGKRAAVYGDPDLVMGLLQFMLEMGIEPVHVLVNNSTKEFEEEAKALLAASPYGQQATVWGGKDLWHMRSLLFTEPVDFLVGNSYAKYLQRDTKTPLIRIGYPIFDRHHLHRYSTIGYEGAINLLNWIANGLMDELDRKTDTPSVTDISFDLVR.

Residues C69, C94, C152, and S187 each coordinate [8Fe-7S] cluster.

This sequence belongs to the NifD/NifK/NifE/NifN family. In terms of assembly, tetramer of two alpha and two beta chains. Forms complex with the iron protein (nitrogenase component 2). [8Fe-7S] cluster serves as cofactor.

The catalysed reaction is N2 + 8 reduced [2Fe-2S]-[ferredoxin] + 16 ATP + 16 H2O = H2 + 8 oxidized [2Fe-2S]-[ferredoxin] + 2 NH4(+) + 16 ADP + 16 phosphate + 6 H(+). This molybdenum-iron protein is part of the nitrogenase complex that catalyzes the key enzymatic reactions in nitrogen fixation. This chain is Nitrogenase molybdenum-iron protein beta chain (nifK), found in Crocosphaera subtropica (strain ATCC 51142 / BH68) (Cyanothece sp. (strain ATCC 51142)).